A 651-amino-acid polypeptide reads, in one-letter code: UvrABC system protein B (651 aa).

Positions 25–178 constitute a Helicase ATP-binding domain; that stretch reads RGISCGAKEQ…CQLQERLVEL (154 aa). ATP is bound at residue 38 to 45; that stretch reads GVTGSGKT. The Beta-hairpin motif lies at 91-114; the sequence is YYDYYQPEAYIPQSDVYIEKDALI. The Helicase C-terminal domain maps to 427–591; that stretch reads DGQIHDVMCE…IVPRTIQKPV (165 aa). Positions 593 to 615 are disordered; it reads TSLSERVGSSRKKVSRDTNTDPA. One can recognise a UVR domain in the interval 616–651; sequence NRDIVELQKEMLLCAENLDFERAVEIRNEIKRLTAP.

This sequence belongs to the UvrB family. In terms of assembly, forms a heterotetramer with UvrA during the search for lesions. Interacts with UvrC in an incision complex.

Its subcellular location is the cytoplasm. Functionally, the UvrABC repair system catalyzes the recognition and processing of DNA lesions. A damage recognition complex composed of 2 UvrA and 2 UvrB subunits scans DNA for abnormalities. Upon binding of the UvrA(2)B(2) complex to a putative damaged site, the DNA wraps around one UvrB monomer. DNA wrap is dependent on ATP binding by UvrB and probably causes local melting of the DNA helix, facilitating insertion of UvrB beta-hairpin between the DNA strands. Then UvrB probes one DNA strand for the presence of a lesion. If a lesion is found the UvrA subunits dissociate and the UvrB-DNA preincision complex is formed. This complex is subsequently bound by UvrC and the second UvrB is released. If no lesion is found, the DNA wraps around the other UvrB subunit that will check the other stand for damage. The chain is UvrABC system protein B from Anaplasma marginale (strain Florida).